The following is a 452-amino-acid chain: 2-succinylbenzoate--CoA ligase (452 aa).

This sequence belongs to the ATP-dependent AMP-binding enzyme family. MenE subfamily.

The catalysed reaction is 2-succinylbenzoate + ATP + CoA = 2-succinylbenzoyl-CoA + AMP + diphosphate. The protein operates within quinol/quinone metabolism; 1,4-dihydroxy-2-naphthoate biosynthesis; 1,4-dihydroxy-2-naphthoate from chorismate: step 5/7. It participates in quinol/quinone metabolism; menaquinone biosynthesis. Its function is as follows. Converts 2-succinylbenzoate (OSB) to 2-succinylbenzoyl-CoA (OSB-CoA). In Haemophilus influenzae (strain ATCC 51907 / DSM 11121 / KW20 / Rd), this protein is 2-succinylbenzoate--CoA ligase.